The primary structure comprises 128 residues: Small ribosomal subunit protein uS11 (128 aa).

Belongs to the universal ribosomal protein uS11 family. As to quaternary structure, part of the 30S ribosomal subunit. Interacts with proteins S7 and S18. Binds to IF-3.

In terms of biological role, located on the platform of the 30S subunit, it bridges several disparate RNA helices of the 16S rRNA. Forms part of the Shine-Dalgarno cleft in the 70S ribosome. In Wolbachia pipientis wMel, this protein is Small ribosomal subunit protein uS11.